A 242-amino-acid chain; its full sequence is Small ribosomal subunit protein uS2 (242 aa).

The protein belongs to the universal ribosomal protein uS2 family.

In Neisseria meningitidis serogroup B (strain ATCC BAA-335 / MC58), this protein is Small ribosomal subunit protein uS2.